Reading from the N-terminus, the 195-residue chain is MTVERIENGVIVQRNTKEIEISITLDTVHGKLEGSTGVNFFDHLLNTFCHYSGLGLRVSTCESKDGILHHLIEDFGISLGQAFRELFDYTKVKRFGEASVPMNEALIGCYVDLSGRPFFQKNFEFSVEKIEDMPVEGFEEFMNGFVNHARITVHFFKFFGKNDHHISESAMKSFGLAIARALERSDTRTTKGVID.

This sequence belongs to the imidazoleglycerol-phosphate dehydratase family.

The protein resides in the cytoplasm. It catalyses the reaction D-erythro-1-(imidazol-4-yl)glycerol 3-phosphate = 3-(imidazol-4-yl)-2-oxopropyl phosphate + H2O. It participates in amino-acid biosynthesis; L-histidine biosynthesis; L-histidine from 5-phospho-alpha-D-ribose 1-diphosphate: step 6/9. This is Imidazoleglycerol-phosphate dehydratase from Thermotoga neapolitana (strain ATCC 49049 / DSM 4359 / NBRC 107923 / NS-E).